The sequence spans 273 residues: Progestin and adipoQ receptor family member 4 (273 aa).

Transmembrane regions (helical) follow at residues 52 to 72 (IYTH…TMPW), 79 to 99 (GWLG…SVLY), 115 to 135 (LLAL…LPII), 185 to 205 (LLVF…SLPC), and 245 to 265 (LLSV…LLWA).

The protein belongs to the ADIPOR family. Interacts with CERS2 and CERS5; the interaction regulates CERS2 and CERS5 stabilities and activities and is inhibited in presence of ceramides. In terms of tissue distribution, expressed in adipose tissue.

The protein resides in the golgi apparatus membrane. In terms of biological role, plays a role in maintaining adipose tissue function through the regulation of ceramide levels. Mediates the stability of ceramide synthetases, CERS2 and CERS5, and their activities. The polypeptide is Progestin and adipoQ receptor family member 4 (Mus musculus (Mouse)).